The primary structure comprises 1446 residues: Sister chromatid cohesion protein PDS5 homolog B (1446 aa).

The HEAT repeat unit spans residues 383–419 (LLVNDHLLNFVRERTLDKRWRVRKEAMMGLAQIYKKY). Position 1136 is an N6-acetyllysine (Lys1136). The segment covering 1137–1155 (PLSSAGKQSQTKSSRMETV) has biased composition (polar residues). The segment at 1137 to 1446 (PLSSAGKQSQ…RRRSSKRERR (310 aa)) is disordered. Residues Ser1140, Ser1162, Ser1166, Ser1176, Ser1182, and Ser1191 each carry the phosphoserine modification. Low complexity predominate over residues 1156-1167 (SNASSSSNPSSP). Residues 1172–1184 (GRLDSSEMDHSEN) show a composition bias toward basic and acidic residues. Composition is skewed to basic and acidic residues over residues 1196 to 1212 (KKSD…LEKP) and 1223 to 1241 (PEEK…EQKP). Positions 1243 to 1252 (GSQRGRKRGR) are enriched in basic residues. The a.T hook 1 DNA-binding region spans 1247-1259 (GRKRGRTASDSDE). A Phosphothreonine modification is found at Thr1253. A phosphoserine mark is found at Ser1255 and Ser1257. The segment covering 1263–1272 (PEEKRHKEEL) has biased composition (basic and acidic residues). Position 1281 is a phosphoserine (Ser1281). Residues 1285-1297 (KGKRGRPPKPLGG) constitute a DNA-binding region (a.T hook 2). 2 stretches are compositionally biased toward basic residues: residues 1308-1317 (TSKKGNKKKL) and 1339-1351 (SKSK…KRAQ). Over residues 1353–1370 (RAESPETSAVESTQSTPQ) the composition is skewed to polar residues. Phosphoserine is present on residues Ser1356 and Ser1364. A Phosphothreonine modification is found at Thr1365. Ser1367 bears the Phosphoserine mark. Thr1368 carries the phosphothreonine modification. Positions 1370-1382 (QKGRGRPSKAPSP) form a DNA-binding region, a.T hook 3. A phosphoserine mark is found at Ser1381, Ser1415, and Ser1418. The segment covering 1421–1431 (TTQEGAEEEDI) has biased composition (acidic residues). Positions 1436–1446 (VRRRSSKRERR) are enriched in basic residues.

The protein belongs to the PDS5 family. As to quaternary structure, interacts with the cohesin complex. Interacts with RAD21; the interaction is direct. Interacts with WAPL (via FGF motifs) or CDCA5 (via the FGF motif); the interaction is direct, cohesin-dependent and competitive. As to expression, expressed in prostate.

The protein resides in the nucleus. Regulator of sister chromatid cohesion in mitosis which may stabilize cohesin complex association with chromatin. May couple sister chromatid cohesion during mitosis to DNA replication. Cohesion ensures that chromosome partitioning is accurate in both meiotic and mitotic cells and plays an important role in DNA repair. Plays a role in androgen-induced proliferative arrest in prostate cells. This is Sister chromatid cohesion protein PDS5 homolog B (Pds5b) from Mus musculus (Mouse).